Here is a 947-residue protein sequence, read N- to C-terminus: Protein NETWORKED 2D (947 aa).

The region spanning 10–90 (YSWWWASHIR…ERYDHISTEL (81 aa)) is the NAB domain. 3 coiled-coil regions span residues 176 to 205 (KPEA…SSYE), 247 to 342 (MTET…HFES), and 375 to 433 (TALI…VLDK). 2 disordered regions span residues 455–555 (NLHE…DKTD) and 580–620 (EKQG…GEPD). Residues 474 to 514 (PQKDLEGEKRTLDISEEIKEHQKETGEEKKEAPVKSVKFEQ) show a composition bias toward basic and acidic residues. A compositionally biased stretch (polar residues) spans 525 to 536 (TIPSTNPDTVLE). 3 stretches are compositionally biased toward basic and acidic residues: residues 537–555 (STEK…DKTD), 580–589 (EKQGESDKID), and 610–620 (EDQKEKEGEPD). 2 coiled-coil regions span residues 645–684 (RNFK…LLQK) and 744–773 (GQIQ…DGSS).

This sequence belongs to the NET family.

Functionally, plant-specific actin binding protein. May be part of a membrane-cytoskeletal adapter complex. The polypeptide is Protein NETWORKED 2D (Arabidopsis thaliana (Mouse-ear cress)).